A 397-amino-acid polypeptide reads, in one-letter code: Purine nucleoside transport protein NupG (397 aa).

Transmembrane regions (helical) follow at residues 1 to 21 (MYFL…FLCS), 32 to 52 (IITL…TKVG), 62 to 82 (FFTW…PSVM), 97 to 117 (IIFI…PWLI), 133 to 153 (LESF…LAVI), 165 to 185 (LLTF…GSYL), 187 to 207 (MVPA…ALII), 242 to 262 (MLVG…YVAL), 282 to 302 (IFAY…HDAM), 335 to 355 (VAVA…GMIY), and 377 to 397 (LLVS…LFVW).

This sequence belongs to the concentrative nucleoside transporter (CNT) (TC 2.A.41) family.

It is found in the cell membrane. Functionally, involved in the uptake of the purine ribonucleosides inosine and guanosine. This is Purine nucleoside transport protein NupG (nupG) from Bacillus subtilis (strain 168).